Consider the following 155-residue polypeptide: Endoribonuclease YbeY (155 aa).

Positions 114, 118, and 124 each coordinate Zn(2+).

The protein belongs to the endoribonuclease YbeY family. It depends on Zn(2+) as a cofactor.

The protein localises to the cytoplasm. Functionally, single strand-specific metallo-endoribonuclease involved in late-stage 70S ribosome quality control and in maturation of the 3' terminus of the 16S rRNA. This is Endoribonuclease YbeY from Salmonella arizonae (strain ATCC BAA-731 / CDC346-86 / RSK2980).